The following is a 597-amino-acid chain: Sialic acid-binding Ig-like lectin 12 (597 aa).

The signal sequence occupies residues 1–20; sequence MLLLLLLLLLPPLLCGRVGA. Ig-like V-type domains lie at 21–144 and 145–271; these read KEQK…VNVT and ASQD…VHVT. At 21–483 the chain is on the extracellular side; that stretch reads KEQKDYLLTM…RPISGVTLGA (463 aa). The cysteines at positions 46 and 106 are disulfide-linked. 4 N-linked (GlcNAc...) asparagine glycosylation sites follow: N142, N181, N232, and N292. Disulfide bonds link C168–C301, C173–C233, and C295–C344. Residues 277–360 enclose the Ig-like C2-type 1 domain; sequence PTFSIPGTLE…AGVTTTRAVR (84 aa). N-linked (GlcNAc...) asparagine glycosylation is found at N362, N369, and N387. The region spanning 367–464 is the Ig-like C2-type 2 domain; sequence PQNLTMTVFQ…GSQHISLSLS (98 aa). Cysteines 403 and 448 form a disulfide. The helical transmembrane segment at 484–504 threads the bilayer; sequence VGGAGATALVFLSFCIIFVVV. Residues 505–597 lie on the Cytoplasmic side of the membrane; that stretch reads RSCRKKSARP…YEYSEINILK (93 aa). Residues 514–558 form a disordered region; it reads PAVGVGDTGMEDTNAVRGSASQGPLIESPADDSPPHHAPPALATP. Residues 565–570 carry the ITIM motif motif; that stretch reads IQYASL. Y567 and Y590 each carry phosphotyrosine. The short motif at 588–593 is the SLAM-like motif element; sequence YEYSEI.

This sequence belongs to the immunoglobulin superfamily. SIGLEC (sialic acid binding Ig-like lectin) family.

Its subcellular location is the membrane. Functionally, putative adhesion molecule that mediates sialic-acid dependent binding to cells. The sialic acid recognition site may be masked by cis interactions with sialic acids on the same cell surface. The chain is Sialic acid-binding Ig-like lectin 12 (SIGLEC12) from Pan troglodytes (Chimpanzee).